A 298-amino-acid polypeptide reads, in one-letter code: ATP-dependent Clp protease proteolytic subunit 5, chloroplastic (298 aa).

Residues 1–100 (MAHACVSTSA…SSPYFPAYAQ (100 aa)) constitute a chloroplast transit peptide. N-acetylglycine is present on Gly101. The active-site Nucleophile is Ser193. His218 is an active-site residue.

The protein belongs to the peptidase S14 family. As to quaternary structure, component of the chloroplastic Clp protease core complex which consist of at least 16 proteins: CLPP4 (3 copies), CLPP5 (3 copies), CLPR4 (2 copies), ClpP1 (1 copy), CLPP6 (1 copy), CLPR2 (1 copy), CLPT1 (1 copy), CLPT2 (1 copy) and 3 copies of CLPP3 and/or CLPR1 and/or CLPR3. The core complex is organized in two heptameric rings, one containing CLPP3,4,5,6 in a 1:2:3:1 ratio and the other CLPP1 and CLPR1,2,3,4 in a 3:1:1:1:1 ratio. Interacts with CHIP. Post-translationally, ubiquitinated in vitro by CHIP. In terms of tissue distribution, mostly expressed in leaves. Also detected in stems, and to a lower extent, in roots (at protein level).

It localises to the plastid. The protein resides in the chloroplast stroma. The enzyme catalyses Hydrolysis of proteins to small peptides in the presence of ATP and magnesium. alpha-casein is the usual test substrate. In the absence of ATP, only oligopeptides shorter than five residues are hydrolyzed (such as succinyl-Leu-Tyr-|-NHMec, and Leu-Tyr-Leu-|-Tyr-Trp, in which cleavage of the -Tyr-|-Leu- and -Tyr-|-Trp bonds also occurs).. Functionally, cleaves peptides in various proteins in a process that requires ATP hydrolysis. Has a chymotrypsin-like activity. Plays a major role in the degradation of misfolded proteins. This Arabidopsis thaliana (Mouse-ear cress) protein is ATP-dependent Clp protease proteolytic subunit 5, chloroplastic.